We begin with the raw amino-acid sequence, 251 residues long: Probable transcriptional regulatory protein DehaBAV1_0421 (251 aa).

The protein belongs to the TACO1 family.

Its subcellular location is the cytoplasm. The sequence is that of Probable transcriptional regulatory protein DehaBAV1_0421 from Dehalococcoides mccartyi (strain ATCC BAA-2100 / JCM 16839 / KCTC 5957 / BAV1).